The sequence spans 184 residues: ATP synthase subunit b, chloroplastic (184 aa).

A helical transmembrane segment spans residues 27 to 49; the sequence is LATNPINLSVVLGVLIFFGKGVL.

It belongs to the ATPase B chain family. As to quaternary structure, F-type ATPases have 2 components, F(1) - the catalytic core - and F(0) - the membrane proton channel. F(1) has five subunits: alpha(3), beta(3), gamma(1), delta(1), epsilon(1). F(0) has four main subunits: a(1), b(1), b'(1) and c(10-14). The alpha and beta chains form an alternating ring which encloses part of the gamma chain. F(1) is attached to F(0) by a central stalk formed by the gamma and epsilon chains, while a peripheral stalk is formed by the delta, b and b' chains.

It localises to the plastid. The protein resides in the chloroplast thylakoid membrane. In terms of biological role, f(1)F(0) ATP synthase produces ATP from ADP in the presence of a proton or sodium gradient. F-type ATPases consist of two structural domains, F(1) containing the extramembraneous catalytic core and F(0) containing the membrane proton channel, linked together by a central stalk and a peripheral stalk. During catalysis, ATP synthesis in the catalytic domain of F(1) is coupled via a rotary mechanism of the central stalk subunits to proton translocation. Component of the F(0) channel, it forms part of the peripheral stalk, linking F(1) to F(0). The sequence is that of ATP synthase subunit b, chloroplastic from Nicotiana sylvestris (Wood tobacco).